A 327-amino-acid chain; its full sequence is MALVHKLLRGTYFLRKFSKPTSALYPFLGIRFAEYSSSLQKPVASPGKASSQRKTEGDLQGDHQKEVALDITSSEEKPDVSFDKAIRDEAIYHFRLLKDEIVDHWRGPEGHPLHEVLLEQAKVVWQFRGKEDLDKWTVTSDKTIGGRSEVFLKMGKNNQSALLYGTLSSEAPQDGESTRSGYCAMISRIPRGAFERKMSYDWSQFNTLYLRVRGDGRPWMVNIKEDTDFFQRTNQMYSYFMFTRGGPYWQEVKIPFSKFFFSNRGRIRDVQHELPLDKISSIGFTLADKVDGPFFLEIDFIGVFTDPAHTEEFAYENSPELNPRLFK.

The transit peptide at 1–24 (MALVHKLLRGTYFLRKFSKPTSAL) directs the protein to the mitochondrion. Positions 42-63 (PVASPGKASSQRKTEGDLQGDH) are disordered. Residues 53–63 (RKTEGDLQGDH) show a composition bias toward basic and acidic residues. Residue Ser-318 is modified to Phosphoserine.

Belongs to the CIA30 family. In terms of assembly, part of the mitochondrial complex I assembly/MCIA complex that comprises at least the core subunits TMEM126B, NDUFAF1, ECSIT and ACAD9 and complement subunits such as COA1 and TMEM186. Interacts with ECSIT. Interacts with ACAD9. At early stages of complex I assembly, it is found in intermediate subcomplexes that contain different subunits including NDUFB6, NDUFA6, NDUFA9, NDUFS3, NDUFS7, ND1, ND2 and ND3. Interacts with TMEM70 and TMEM242. Ubiquitous.

The protein localises to the mitochondrion. Its subcellular location is the mitochondrion matrix. Its function is as follows. As part of the MCIA complex, involved in the assembly of the mitochondrial complex I. The protein is Complex I intermediate-associated protein 30, mitochondrial of Homo sapiens (Human).